The sequence spans 527 residues: Putative ABC transporter peptide-binding protein BOV_A0352 (527 aa).

Residues 1–23 (MRLRNFYSALALSAAVFAGPLYA) form the signal peptide.

It belongs to the bacterial solute-binding protein 5 family. As to quaternary structure, the complex is composed of two ATP-binding proteins (BOV_A0347 and BOV_A0348), two transmembrane proteins (BOV_A0350 and BOV_A0351) and a solute-binding protein (BOV_A0352).

It localises to the periplasm. Probably part of an ABC transporter complex that could be involved in peptide import. This chain is Putative ABC transporter peptide-binding protein BOV_A0352, found in Brucella ovis (strain ATCC 25840 / 63/290 / NCTC 10512).